Reading from the N-terminus, the 86-residue chain is Exodeoxyribonuclease 7 small subunit (86 aa).

This sequence belongs to the XseB family. As to quaternary structure, heterooligomer composed of large and small subunits.

It is found in the cytoplasm. It carries out the reaction Exonucleolytic cleavage in either 5'- to 3'- or 3'- to 5'-direction to yield nucleoside 5'-phosphates.. Its function is as follows. Bidirectionally degrades single-stranded DNA into large acid-insoluble oligonucleotides, which are then degraded further into small acid-soluble oligonucleotides. In Agrobacterium fabrum (strain C58 / ATCC 33970) (Agrobacterium tumefaciens (strain C58)), this protein is Exodeoxyribonuclease 7 small subunit.